Reading from the N-terminus, the 179-residue chain is Large ribosomal subunit protein uL5 (179 aa).

Belongs to the universal ribosomal protein uL5 family. As to quaternary structure, part of the 50S ribosomal subunit; part of the 5S rRNA/L5/L18/L25 subcomplex. Contacts the 5S rRNA and the P site tRNA. Forms a bridge to the 30S subunit in the 70S ribosome.

This is one of the proteins that bind and probably mediate the attachment of the 5S RNA into the large ribosomal subunit, where it forms part of the central protuberance. In the 70S ribosome it contacts protein S13 of the 30S subunit (bridge B1b), connecting the 2 subunits; this bridge is implicated in subunit movement. Contacts the P site tRNA; the 5S rRNA and some of its associated proteins might help stabilize positioning of ribosome-bound tRNAs. The chain is Large ribosomal subunit protein uL5 from Lachnoclostridium phytofermentans (strain ATCC 700394 / DSM 18823 / ISDg) (Clostridium phytofermentans).